The sequence spans 211 residues: Holliday junction branch migration complex subunit RuvA (211 aa).

Residues 1–64 form a domain I region; the sequence is MIGRLRGMLV…EDAQLLYGFA (64 aa). The tract at residues 65–143 is domain II; sequence NKVERKLFRL…DWQAQQIHLV (79 aa). The interval 144–162 is flexible linker; it reads SDDGVIPEQLSAELSQETT. The segment at 163 to 211 is domain III; it reads FVNDNKGDAINALLSLGYKQVQADKAVKSVYNRGMSSENIIRDALKSMI.

This sequence belongs to the RuvA family. Homotetramer. Forms an RuvA(8)-RuvB(12)-Holliday junction (HJ) complex. HJ DNA is sandwiched between 2 RuvA tetramers; dsDNA enters through RuvA and exits via RuvB. An RuvB hexamer assembles on each DNA strand where it exits the tetramer. Each RuvB hexamer is contacted by two RuvA subunits (via domain III) on 2 adjacent RuvB subunits; this complex drives branch migration. In the full resolvosome a probable DNA-RuvA(4)-RuvB(12)-RuvC(2) complex forms which resolves the HJ.

It localises to the cytoplasm. The RuvA-RuvB-RuvC complex processes Holliday junction (HJ) DNA during genetic recombination and DNA repair, while the RuvA-RuvB complex plays an important role in the rescue of blocked DNA replication forks via replication fork reversal (RFR). RuvA specifically binds to HJ cruciform DNA, conferring on it an open structure. The RuvB hexamer acts as an ATP-dependent pump, pulling dsDNA into and through the RuvAB complex. HJ branch migration allows RuvC to scan DNA until it finds its consensus sequence, where it cleaves and resolves the cruciform DNA. In Colwellia psychrerythraea (strain 34H / ATCC BAA-681) (Vibrio psychroerythus), this protein is Holliday junction branch migration complex subunit RuvA.